The sequence spans 351 residues: L-threonine 3-dehydrogenase (351 aa).

Cys-42 contributes to the Zn(2+) binding site. Catalysis depends on charge relay system residues Thr-44 and His-47. Positions 67, 68, 97, 100, 103, and 111 each coordinate Zn(2+). NAD(+) contacts are provided by residues Ile-179, Asp-199, Arg-204, 266–268, and 291–292; these read LGL and IT.

It belongs to the zinc-containing alcohol dehydrogenase family. In terms of assembly, homotetramer. It depends on Zn(2+) as a cofactor.

It is found in the cytoplasm. The enzyme catalyses L-threonine + NAD(+) = (2S)-2-amino-3-oxobutanoate + NADH + H(+). The protein operates within amino-acid degradation; L-threonine degradation via oxydo-reductase pathway; glycine from L-threonine: step 1/2. Functionally, catalyzes the NAD(+)-dependent oxidation of L-threonine to 2-amino-3-ketobutyrate. This Symbiobacterium thermophilum (strain DSM 24528 / JCM 14929 / IAM 14863 / T) protein is L-threonine 3-dehydrogenase.